We begin with the raw amino-acid sequence, 120 residues long: Large ribosomal subunit protein uL18 (120 aa).

Belongs to the universal ribosomal protein uL18 family. In terms of assembly, part of the 50S ribosomal subunit; part of the 5S rRNA/L5/L18/L25 subcomplex. Contacts the 5S and 23S rRNAs.

This is one of the proteins that bind and probably mediate the attachment of the 5S RNA into the large ribosomal subunit, where it forms part of the central protuberance. The chain is Large ribosomal subunit protein uL18 from Bordetella bronchiseptica (strain ATCC BAA-588 / NCTC 13252 / RB50) (Alcaligenes bronchisepticus).